The primary structure comprises 144 residues: HTH-type transcriptional regulator MntR (144 aa).

The HTH dtxR-type domain maps to 1–63 (MTTPSMEDYI…YEKYRGLILT (63 aa)). 6 residues coordinate Mn(2+): Asp-8, Glu-11, His-77, Glu-99, Glu-102, and His-103.

Belongs to the DtxR/MntR family. In terms of assembly, homodimer.

The protein localises to the cytoplasm. With respect to regulation, DNA binding is strongly activated by Mn(2+). Functionally, central regulator of manganese homeostasis. The protein is HTH-type transcriptional regulator MntR of Bacillus pumilus (strain SAFR-032).